Here is a 223-residue protein sequence, read N- to C-terminus: Large ribosomal subunit protein uL3 (223 aa).

This sequence belongs to the universal ribosomal protein uL3 family. Part of the 50S ribosomal subunit. Forms a cluster with proteins L14 and L19.

Its function is as follows. One of the primary rRNA binding proteins, it binds directly near the 3'-end of the 23S rRNA, where it nucleates assembly of the 50S subunit. The protein is Large ribosomal subunit protein uL3 of Cutibacterium acnes (strain DSM 16379 / KPA171202) (Propionibacterium acnes).